Here is a 308-residue protein sequence, read N- to C-terminus: GTP-binding protein RAD (308 aa).

Residues 1–15 (MTLNGGSGASGSRGA) are compositionally biased toward gly residues. The segment at 1-86 (MTLNGGSGAS…SDSLSSGGSG (86 aa)) is disordered. The residue at position 24 (Arg24) is an Omega-N-methylarginine. Ser26 carries the post-translational modification Phosphoserine. Residues 57 to 82 (ATTAAGTRTQGQRLDWPEGSSDSLSS) are compositionally biased toward low complexity. GTP-binding positions include 98-105 (GAPGVGKS) and 203-206 (NKSD). A calmodulin-binding region spans residues 278-297 (AKRFLGRIVARNSRKMAFRA).

This sequence belongs to the small GTPase superfamily. RGK family. Interacts with Calmodulin preferentially in the inactive, GDP-bound form. Interacts with CAMK2D. Interacts with CACNB2; interaction may be involved in beta-adrenergic regulation of heart rate and contractile force. Interaction with CACNB2 regulates the trafficking of CACNA1C to the cell membrane. In terms of processing, phosphorylation at Ser-26, Ser-39, Ser-273 and Ser-301 may be involved in regulating inhibition of voltage-gated L-type Ca(2+) channels.

Its subcellular location is the cell membrane. In terms of biological role, may regulate basal voltage-dependent L-type Ca(2+) currents and be required for beta-adrenergic augmentation of Ca(2+) influx in cardiomyocytes, thereby regulating increases in heart rate and contractile force. May play an important role in cardiac antiarrhythmia via the strong suppression of voltage-dependent L-type Ca(2+) currents. Regulates voltage-gated L-type calcium channel subunit alpha-1C trafficking to the cell membrane. Inhibits cardiac hypertrophy through the calmodulin-dependent kinase II (CaMKII) pathway. Inhibits phosphorylation and activation of CAMK2D. This is GTP-binding protein RAD (Rrad) from Mus musculus (Mouse).